A 616-amino-acid polypeptide reads, in one-letter code: Chaperone protein HtpG (616 aa).

Positions 1–334 (MTIKQTHSFQ…TADLSLNLSR (334 aa)) are a; substrate-binding. The segment at 335 to 549 (EILQDNKVIK…ENEMGGNMER (215 aa)) is b. The c stretch occupies residues 550–616 (IMKSLGQDIP…FVKRINKLIN (67 aa)).

It belongs to the heat shock protein 90 family. In terms of assembly, homodimer.

Its subcellular location is the cytoplasm. Functionally, molecular chaperone. Has ATPase activity. The chain is Chaperone protein HtpG from Vesicomyosocius okutanii subsp. Calyptogena okutanii (strain HA).